Consider the following 80-residue polypeptide: Large ribosomal subunit protein bL31 (80 aa).

Residues C16, C18, C38, and C41 each contribute to the Zn(2+) site.

It belongs to the bacterial ribosomal protein bL31 family. Type A subfamily. In terms of assembly, part of the 50S ribosomal subunit. Zn(2+) serves as cofactor.

Functionally, binds the 23S rRNA. The polypeptide is Large ribosomal subunit protein bL31 (Rhodococcus jostii (strain RHA1)).